A 271-amino-acid polypeptide reads, in one-letter code: 3-methyl-2-oxobutanoate hydroxymethyltransferase (271 aa).

Aspartate 51 and aspartate 90 together coordinate Mg(2+). Residues aspartate 51–serine 52, aspartate 90, and lysine 118 each bind 3-methyl-2-oxobutanoate. Glutamate 120 is a binding site for Mg(2+). The Proton acceptor role is filled by glutamate 186.

The protein belongs to the PanB family. As to quaternary structure, homodecamer; pentamer of dimers. The cofactor is Mg(2+).

Its subcellular location is the cytoplasm. It catalyses the reaction 3-methyl-2-oxobutanoate + (6R)-5,10-methylene-5,6,7,8-tetrahydrofolate + H2O = 2-dehydropantoate + (6S)-5,6,7,8-tetrahydrofolate. The protein operates within cofactor biosynthesis; (R)-pantothenate biosynthesis; (R)-pantoate from 3-methyl-2-oxobutanoate: step 1/2. Catalyzes the reversible reaction in which hydroxymethyl group from 5,10-methylenetetrahydrofolate is transferred onto alpha-ketoisovalerate to form ketopantoate. The chain is 3-methyl-2-oxobutanoate hydroxymethyltransferase from Xanthomonas oryzae pv. oryzae (strain MAFF 311018).